The following is a 331-amino-acid chain: Glyceraldehyde-3-phosphate dehydrogenase (331 aa).

Residues 12-13, aspartate 34, arginine 78, and threonine 120 each bind NAD(+); that span reads RI. D-glyceraldehyde 3-phosphate is bound by residues 149–151, threonine 180, 209–210, and arginine 232; these read SCT and TG. Catalysis depends on cysteine 150, which acts as the Nucleophile. Position 314 (asparagine 314) interacts with NAD(+).

This sequence belongs to the glyceraldehyde-3-phosphate dehydrogenase family. Homotetramer.

The protein resides in the cytoplasm. The enzyme catalyses D-glyceraldehyde 3-phosphate + phosphate + NAD(+) = (2R)-3-phospho-glyceroyl phosphate + NADH + H(+). The protein operates within carbohydrate degradation; glycolysis; pyruvate from D-glyceraldehyde 3-phosphate: step 1/5. Catalyzes the oxidative phosphorylation of glyceraldehyde 3-phosphate (G3P) to 1,3-bisphosphoglycerate (BPG) using the cofactor NAD. The first reaction step involves the formation of a hemiacetal intermediate between G3P and a cysteine residue, and this hemiacetal intermediate is then oxidized to a thioester, with concomitant reduction of NAD to NADH. The reduced NADH is then exchanged with the second NAD, and the thioester is attacked by a nucleophilic inorganic phosphate to produce BPG. The chain is Glyceraldehyde-3-phosphate dehydrogenase (gapA) from Salmonella typhi.